We begin with the raw amino-acid sequence, 518 residues long: Zinc finger protein 776 (518 aa).

Residues 14–89 (VTFEDVAVNF…HWTGVCTKKV (76 aa)) enclose the KRAB domain. Glycyl lysine isopeptide (Lys-Gly) (interchain with G-Cter in SUMO2) cross-links involve residues Lys171, Lys196, Lys220, and Lys247. Residues 208–230 (YICGESTIPFSNKHSLVLHQRLL) form a C2H2-type 1; degenerate zinc finger. The C2H2-type 2; degenerate zinc-finger motif lies at 236 to 258 (YVCSDSGKFTSKSNSFNNHQGVR). 7 C2H2-type zinc fingers span residues 264 to 286 (YQCGQCDESFWYKAHLTEHQRVH), 292 to 314 (YECGECDKSFSHKHSLVDHQRVH), 320 to 342 (YECDECGKSFSHKRSLVHHQRVH), 348 to 370 (YQCGECGKSFNHKCNLIQHQRVH), 376 to 398 (FECTACGKLFRSNSHLKEHQRVH), 404 to 426 (YECKECRKSFRYKSHLTEHQRVH), and 432 to 454 (YECRECGKCFHQKGSLIQHQQIH). The C2H2-type 10; degenerate zinc-finger motif lies at 460–482 (HECGECGKCFHQKGSLIRHQQIH). A C2H2-type 11 zinc finger spans residues 488 to 510 (HECGECGKCFRQKGNLIKHQRVH).

Belongs to the krueppel C2H2-type zinc-finger protein family.

It localises to the nucleus. Functionally, may be involved in transcriptional regulation. This Homo sapiens (Human) protein is Zinc finger protein 776 (ZNF776).